The following is a 232-amino-acid chain: Histone H1A (232 aa).

Low complexity predominate over residues Met-1–Ala-18. 2 disordered regions span residues Met-1–Pro-42 and Leu-98–Ala-232. Positions Thr-39–Ala-113 constitute an H15 domain. Composition is skewed to basic residues over residues Lys-131 to Lys-141, Lys-147 to Lys-173, Ala-181 to Lys-214, and Lys-222 to Ala-232.

The protein belongs to the histone H1/H5 family.

Its subcellular location is the nucleus. The protein resides in the chromosome. Histones H1 are necessary for the condensation of nucleosome chains into higher-order structures. This chain is Histone H1A, found in Chironomus tentans (Midge).